Here is a 367-residue protein sequence, read N- to C-terminus: WAT1-related protein At3g28050 (367 aa).

The next 10 helical transmembrane spans lie at 10-30, 40-60, 73-93, 103-123, 142-162, 179-199, 211-231, 246-266, 276-296, and 301-321; these read VLPV…NTLF, FHVF…PSLF, FSIL…NIMG, TLAS…AVVF, TVVS…VVIA, WILG…WYIV, FTVV…VTLF, IALV…NTIH, LFVA…GVIF, and LYIG…TVMW. 2 EamA domains span residues 25-153 and 195-319; these read GLNT…FIVT and LWYI…FYTV. The disordered stretch occupies residues 338–367; the sequence is HEEANEADLDSPSGSQKAPLLESYKNDEHV.

Belongs to the drug/metabolite transporter (DMT) superfamily. Plant drug/metabolite exporter (P-DME) (TC 2.A.7.4) family.

It is found in the membrane. The sequence is that of WAT1-related protein At3g28050 from Arabidopsis thaliana (Mouse-ear cress).